The chain runs to 345 residues: MVNKSTTNGVSDPNLENKRTKVTLTNSGVENARGTYYSGAYTSVGYDNSFNLNRFKENFKINILSESANELVFEMIGIDAPIANALRRIMISEIPTMAIEKVYIINNTSILQDEVLAHRLGMIPIKVDPRKFNFKLPNKEYTAEDTLIFQLKVKCEKDSVTGKIINETALSKHLIWVPTQDQEEMFPNEEDRPRPMEDDIPIMKLRPGQVIDIQCYCEKNIGREHIKWSPVCTASYRLQPVISVDKSIKGDKANQLLEKCPKKVFDIEDSGQVVAARPLDCTMCRECIRDPEFEQNVKIERVRDHFIFSIESTGALKSREIFQEAIKIFIEKCNIVEESINKLVN.

The segment covering 1-11 (MVNKSTTNGVS) has biased composition (polar residues). The tract at residues 1–20 (MVNKSTTNGVSDPNLENKRT) is disordered.

It belongs to the archaeal Rpo3/eukaryotic RPB3 RNA polymerase subunit family. As to quaternary structure, component of the RNA polymerase I (Pol I) and RNA polymerase III (Pol III) complexes consisting of at least 13 and 17 subunits, respectively. Interacts with RPAC19/RPAC2.

It is found in the nucleus. Functionally, DNA-dependent RNA polymerase catalyzes the transcription of DNA into RNA using the four ribonucleoside triphosphates as substrates. Common component of RNA polymerases I and III which synthesize ribosomal RNA precursors and small RNAs, such as 5S rRNA and tRNAs, respectively. RPAC1 is part of the Pol core element with the central large cleft and probably a clamp element that moves to open and close the cleft. In Dictyostelium discoideum (Social amoeba), this protein is DNA-directed RNA polymerases I and III subunit rpac1 (polr1c).